A 242-amino-acid chain; its full sequence is uncharacterized protein (242 aa).

The region spanning 2–62 (EKAYKLLSVQ…VEKPSVIFED (61 aa)) is the S4 RNA-binding domain. Residue D93 is part of the active site.

It belongs to the pseudouridine synthase RluA family.

The catalysed reaction is a uridine in RNA = a pseudouridine in RNA. This is an uncharacterized protein from Helicobacter pylori (strain J99 / ATCC 700824) (Campylobacter pylori J99).